A 548-amino-acid chain; its full sequence is Membrane protein insertase YidC (548 aa).

The next 5 helical transmembrane spans lie at asparagine 6–aspartate 26, threonine 349–valine 369, leucine 424–leucine 444, phenylalanine 455–methionine 475, and proline 503–valine 523.

It belongs to the OXA1/ALB3/YidC family. Type 1 subfamily. As to quaternary structure, interacts with the Sec translocase complex via SecD. Specifically interacts with transmembrane segments of nascent integral membrane proteins during membrane integration.

Its subcellular location is the cell inner membrane. Its function is as follows. Required for the insertion and/or proper folding and/or complex formation of integral membrane proteins into the membrane. Involved in integration of membrane proteins that insert both dependently and independently of the Sec translocase complex, as well as at least some lipoproteins. Aids folding of multispanning membrane proteins. The protein is Membrane protein insertase YidC of Aeromonas salmonicida (strain A449).